Consider the following 275-residue polypeptide: C-type lectin domain family 12 member B (275 aa).

The Cytoplasmic portion of the chain corresponds to 1–41; the sequence is MSDEVTYATLMLQDSARVRGNQDGNNLRKEGHPAQSSLWRG. The short motif at 5–10 is the ITIM motif element; it reads VTYATL. At Tyr-7 the chain carries Phosphotyrosine. A helical; Signal-anchor for type II membrane protein transmembrane segment spans residues 42–64; that stretch reads AALSLMTLCLVLVTGLVTLATMF. Residues 65 to 275 are Extracellular-facing; it reads LQVSNDINSD…ASLVKTEDLD (211 aa). Asn-91, Asn-175, and Asn-236 each carry an N-linked (GlcNAc...) asparagine glycan. The C-type lectin domain maps to 149 to 263; that stretch reads YGNSCYYFSI…CSAEIPWICE (115 aa). 2 disulfides stabilise this stretch: Cys-171-Cys-262 and Cys-241-Cys-254.

In terms of assembly, homodimer. Interacts (via ITIM motif) with PTPN6. Interacts (via ITIM motif) with PTPN11; this interaction triggers dephosphorylation and activation of PTPN11.

The protein resides in the cell membrane. In terms of biological role, inhibitory receptor postulated to negatively regulate immune and non-immune functions. Upon phosphorylation, recruits SH2 domain-containing PTPN6 and PTPN11 phosphatases to its ITIM motif and antagonizes activation signals. Although it inhibits KLRK1/NKG2D-mediated signaling, it does not bind known ligands of KLRK1/NKG2D and therefore is not its inhibitory counterpart. May limit activation of myeloid cell subsets in response to infection or tissue inflammation. May protect target cells against natural killer cell-mediated lysis. May negatively regulate cell cycle and differentiation of melanocytes via inactivation of STAT3. This is C-type lectin domain family 12 member B (Clec12b) from Mus musculus (Mouse).